A 906-amino-acid polypeptide reads, in one-letter code: Probable dipeptidyl-aminopeptidase B (906 aa).

Acidic residues predominate over residues 1–11 (MRSSEDREDSE). The tract at residues 1 to 33 (MRSSEDREDSELLPANRPRSPSRSSYDSDDSGL) is disordered. Over 1–85 (MRSSEDREDS…TKASSSRSRR (85 aa)) the chain is Cytoplasmic. Positions 21-33 (PSRSSYDSDDSGL) are enriched in low complexity. Residues 86–106 (LLWLVVLLCCGGWVVAFVLFI) traverse the membrane as a helical; Signal-anchor for type II membrane protein segment. Topologically, residues 107-906 (TQGRADYRTA…AKRVWPGFAH (800 aa)) are vacuolar. N-linked (GlcNAc...) asparagine glycosylation is found at asparagine 338 and asparagine 629. Serine 743 acts as the Charge relay system in catalysis. Asparagine 797 carries an N-linked (GlcNAc...) asparagine glycan. Residues aspartate 820 and histidine 853 each act as charge relay system in the active site.

Belongs to the peptidase S9B family.

It localises to the vacuole membrane. The catalysed reaction is Release of an N-terminal dipeptide, Xaa-Yaa-|-Zaa-, from a polypeptide, preferentially when Yaa is Pro, provided Zaa is neither Pro nor hydroxyproline.. Type IV dipeptidyl-peptidase which removes N-terminal dipeptides sequentially from polypeptides having unsubstituted N-termini provided that the penultimate residue is proline. This Emericella nidulans (strain FGSC A4 / ATCC 38163 / CBS 112.46 / NRRL 194 / M139) (Aspergillus nidulans) protein is Probable dipeptidyl-aminopeptidase B (dapB).